A 793-amino-acid polypeptide reads, in one-letter code: Xaa-Pro dipeptidyl-peptidase (793 aa).

Residues serine 363, aspartate 483, and histidine 514 each act as charge relay system in the active site.

Belongs to the peptidase S15 family. As to quaternary structure, homodimer.

Its subcellular location is the cytoplasm. The enzyme catalyses Hydrolyzes Xaa-Pro-|- bonds to release unblocked, N-terminal dipeptides from substrates including Ala-Pro-|-p-nitroanilide and (sequentially) Tyr-Pro-|-Phe-Pro-|-Gly-Pro-|-Ile.. Removes N-terminal dipeptides sequentially from polypeptides having unsubstituted N-termini provided that the penultimate residue is proline. The protein is Xaa-Pro dipeptidyl-peptidase of Lactobacillus helveticus (strain DPC 4571).